The sequence spans 700 residues: Tectonic-2 (700 aa).

The signal sequence occupies residues 1 to 25 (MGSLSPLSLLWGLLLLQGVLRPLRG). Topologically, residues 26–665 (DPVFIPPFIR…YYQGEPQSQC (640 aa)) are extracellular. 5 N-linked (GlcNAc...) asparagine glycosylation sites follow: N76, N82, N146, N156, and N389. The helical transmembrane segment at 666–682 (VAKGLMLLSLLMLAILL) threads the bilayer. At 683–700 (RHPWVRMCKARDSAAIYH) the chain is on the cytoplasmic side.

The protein belongs to the tectonic family. In terms of assembly, part of the tectonic-like complex (also named B9 complex). In terms of tissue distribution, significant expression is observed in brain, kidney and eye.

Its subcellular location is the membrane. The protein localises to the cytoplasm. The protein resides in the cytoskeleton. It localises to the cilium basal body. In terms of biological role, component of the tectonic-like complex, a complex localized at the transition zone of primary cilia and acting as a barrier that prevents diffusion of transmembrane proteins between the cilia and plasma membranes. Required for hedgehog signaling transduction. The chain is Tectonic-2 (Tctn2) from Mus musculus (Mouse).